Consider the following 132-residue polypeptide: Small ribosomal subunit protein uS8 (132 aa).

It belongs to the universal ribosomal protein uS8 family. As to quaternary structure, part of the 30S ribosomal subunit. Contacts proteins S5 and S12.

Functionally, one of the primary rRNA binding proteins, it binds directly to 16S rRNA central domain where it helps coordinate assembly of the platform of the 30S subunit. The chain is Small ribosomal subunit protein uS8 from Clostridium botulinum (strain 657 / Type Ba4).